The chain runs to 493 residues: Alpha-amylase-related protein (493 aa).

Residues 1–19 (MFKFALTLTLCLAGSLSLA) form the signal peptide. Gln-20 carries the post-translational modification Pyrrolidone carboxylic acid. An intrachain disulfide couples Cys-47 to Cys-103. 3 residues coordinate Ca(2+): Asn-117, Gln-168, and Asp-177. A disulfide bridge connects residues Cys-156 and Cys-170. Residue Arg-205 participates in chloride binding. Asp-207 acts as the Nucleophile in catalysis. His-211 provides a ligand contact to Ca(2+). The Proton donor role is filled by Glu-244. Chloride is bound by residues Asn-307 and Arg-342. 3 disulfides stabilise this stretch: Cys-375-Cys-381, Cys-417-Cys-440, and Cys-447-Cys-459.

Belongs to the glycosyl hydrolase 13 family. In terms of assembly, monomer. Ca(2+) is required as a cofactor. Requires chloride as cofactor.

It is found in the secreted. It carries out the reaction Endohydrolysis of (1-&gt;4)-alpha-D-glucosidic linkages in polysaccharides containing three or more (1-&gt;4)-alpha-linked D-glucose units.. The protein is Alpha-amylase-related protein (Amyrel) of Drosophila sechellia (Fruit fly).